Reading from the N-terminus, the 49-residue chain is Isoflavone reductase homolog 2 (49 aa).

5–11 (GGTGYIG) is a binding site for NADP(+).

The protein belongs to the NmrA-type oxidoreductase family. Isoflavone reductase subfamily.

It localises to the cytoplasm. The chain is Isoflavone reductase homolog 2 from Pseudotsuga menziesii (Douglas-fir).